The sequence spans 197 residues: Thymidylate kinase (197 aa).

Position 7-14 (7-14) interacts with ATP; it reads GIDGCGKS.

The protein belongs to the thymidylate kinase family.

It carries out the reaction dTMP + ATP = dTDP + ADP. Functionally, phosphorylation of dTMP to form dTDP in both de novo and salvage pathways of dTTP synthesis. The sequence is that of Thymidylate kinase from Fervidobacterium nodosum (strain ATCC 35602 / DSM 5306 / Rt17-B1).